Reading from the N-terminus, the 1033-residue chain is NACHT, LRR and PYD domains-containing protein 11 (1033 aa).

The Pyrin domain maps to 1–91; the sequence is MAESDSTDFD…CRKIIGRRNR (91 aa). One can recognise an NACHT domain in the interval 147 to 470; that stretch reads LNVFLMGERA…AFLMAVPNYL (324 aa). Residue 153-160 participates in ATP binding; the sequence is GERASGKT. LRR repeat units lie at residues 588–611, 632–655, 745–768, 802–827, 859–882, and 919–944; these read CCHL…LIRP, MESL…ILSK, GGSL…ILCD, SPTL…TFPL, NEKL…LLCG, and LERL…LISP.

This sequence belongs to the NLRP family.

In terms of biological role, involved in inflammation. The polypeptide is NACHT, LRR and PYD domains-containing protein 11 (NLRP11) (Homo sapiens (Human)).